The sequence spans 481 residues: Molybdate-anion transporter (481 aa).

Transmembrane regions (helical) follow at residues 1–21 (MFVT…ALEI), 47–67 (LFLK…PYLY), 80–100 (IAIL…VAGW), 131–151 (FMLI…TTTF), 180–200 (WNYG…EWLG), 201–221 (LGPV…AWFV), 276–296 (VMLL…FVFL), 306–326 (PPLG…STLF), 341–361 (LLCL…FSTV), 371–391 (LLAF…VSFL), 403–423 (AVLA…LLAL), and 443–463 (FAGC…LFTV).

This sequence belongs to the major facilitator superfamily.

Its subcellular location is the cell membrane. In terms of biological role, mediates high-affinity intracellular uptake of the rare oligo-element molybdenum. This chain is Molybdate-anion transporter (mfsd5), found in Danio rerio (Zebrafish).